A 163-amino-acid chain; its full sequence is NADH-quinone oxidoreductase subunit I (163 aa).

4Fe-4S ferredoxin-type domains follow at residues 53–83 (LRRYPNGEERCIACKLCEAICPAQAITIEAG) and 94–123 (VRYDIDMVKCIYCGFCQEACPVEAIVEGPN). 8 residues coordinate [4Fe-4S] cluster: Cys-63, Cys-66, Cys-69, Cys-73, Cys-103, Cys-106, Cys-109, and Cys-113.

This sequence belongs to the complex I 23 kDa subunit family. As to quaternary structure, NDH-1 is composed of 14 different subunits. Subunits NuoA, H, J, K, L, M, N constitute the membrane sector of the complex. Requires [4Fe-4S] cluster as cofactor.

It localises to the cell inner membrane. It carries out the reaction a quinone + NADH + 5 H(+)(in) = a quinol + NAD(+) + 4 H(+)(out). NDH-1 shuttles electrons from NADH, via FMN and iron-sulfur (Fe-S) centers, to quinones in the respiratory chain. The immediate electron acceptor for the enzyme in this species is believed to be ubiquinone. Couples the redox reaction to proton translocation (for every two electrons transferred, four hydrogen ions are translocated across the cytoplasmic membrane), and thus conserves the redox energy in a proton gradient. This chain is NADH-quinone oxidoreductase subunit I, found in Bartonella tribocorum (strain CIP 105476 / IBS 506).